Consider the following 403-residue polypeptide: Accessory Sec system protein translocase subunit SecY2 (403 aa).

10 helical membrane-spanning segments follow: residues 17-37 (MLYTCFILFIYILGTNISIVS), 63-83 (LNIFTLGLVPWLTSMIILMLI), 105-125 (ILTLILSVIQSYFVIHEYVSK), 131-151 (DNIYLTILILVTGTMLLVWLA), 157-177 (YGIAGPMPIVMVSIIKSMMHQ), 186-206 (HIVIALLIILVIITLFILLFI), 240-260 (ITLMMSISAFVFLKSGIHFIL), 276-296 (FDSPVGISVYLVIQMLLGYFL), 339-359 (WFGSALVTVIIGIPLYFTLFV), and 366-386 (IYFSVQLIVLVYISINIAETI).

It belongs to the SecY/SEC61-alpha family. SecY2 subfamily. As to quaternary structure, component of the accessory SecA2/SecY2 protein translocase complex required to export cell wall proteins. May form heterotrimers with SecE and SecG subunits.

It is found in the cell membrane. Its function is as follows. Part of the accessory SecA2/SecY2 system specifically required for export of possible cell wall proteins. The central subunit of a protein translocation channel. The sequence is that of Accessory Sec system protein translocase subunit SecY2 from Staphylococcus aureus (strain N315).